The sequence spans 239 residues: Small ribosomal subunit protein eS6B (239 aa).

Phosphoserine is present on residues Ser-148, Ser-235, and Ser-236.

The protein belongs to the eukaryotic ribosomal protein eS6 family. Component of the small ribosomal subunit (SSU). Mature yeast ribosomes consist of a small (40S) and a large (60S) subunit. The 40S small subunit contains 1 molecule of ribosomal RNA (18S rRNA) and at least 33 different proteins. The large 60S subunit contains 3 rRNA molecules (25S, 5.8S and 5S rRNA) and at least 46 different proteins. Interacts with snoRNA U3. uS11 interacts with MPP10. Component of the ribosomal small subunit (SSU) processome composed of at least 40 protein subunits and snoRNA U3.

It localises to the cytoplasm. Component of the ribosome, a large ribonucleoprotein complex responsible for the synthesis of proteins in the cell. The small ribosomal subunit (SSU) binds messenger RNAs (mRNAs) and translates the encoded message by selecting cognate aminoacyl-transfer RNA (tRNA) molecules. The large subunit (LSU) contains the ribosomal catalytic site termed the peptidyl transferase center (PTC), which catalyzes the formation of peptide bonds, thereby polymerizing the amino acids delivered by tRNAs into a polypeptide chain. The nascent polypeptides leave the ribosome through a tunnel in the LSU and interact with protein factors that function in enzymatic processing, targeting, and the membrane insertion of nascent chains at the exit of the ribosomal tunnel. eS6 is involved in nucleolar processing of pre-18S ribosomal RNA and ribosome assembly. The protein is Small ribosomal subunit protein eS6B (rps602) of Schizosaccharomyces pombe (strain 972 / ATCC 24843) (Fission yeast).